Reading from the N-terminus, the 203-residue chain is Hypoxanthine-guanine phosphoribosyltransferase (203 aa).

Positions 66 and 67 each coordinate diphosphate. Residues E122 and D123 each coordinate Mg(2+). Catalysis depends on D126, which acts as the Proton acceptor. Residues K154, F175–V176, and D182 each bind GMP. R188 serves as a coordination point for diphosphate.

It belongs to the purine/pyrimidine phosphoribosyltransferase family. Requires Mg(2+) as cofactor.

Its subcellular location is the cytoplasm. The catalysed reaction is IMP + diphosphate = hypoxanthine + 5-phospho-alpha-D-ribose 1-diphosphate. It catalyses the reaction GMP + diphosphate = guanine + 5-phospho-alpha-D-ribose 1-diphosphate. Its pathway is purine metabolism; IMP biosynthesis via salvage pathway; IMP from hypoxanthine: step 1/1. It functions in the pathway purine metabolism; GMP biosynthesis via salvage pathway; GMP from guanine: step 1/1. Purine salvage pathway enzyme that catalyzes the transfer of the ribosyl-5-phosphate group from 5-phospho-alpha-D-ribose 1-diphosphate (PRPP) to the N9 position of the 6-oxopurines hypoxanthine and guanine to form the corresponding ribonucleotides IMP (inosine 5'-monophosphate) and GMP (guanosine 5'-monophosphate), with the release of PPi. This Mycobacterium avium protein is Hypoxanthine-guanine phosphoribosyltransferase (hpt).